Here is a 527-residue protein sequence, read N- to C-terminus: GMP synthase [glutamine-hydrolyzing] (527 aa).

The 199-residue stretch at 11–209 folds into the Glutamine amidotransferase type-1 domain; sequence RILILDFGSQ…VLNICGCENL (199 aa). The active-site Nucleophile is the Cys-88. Residues His-183 and Glu-185 contribute to the active site. In terms of domain architecture, GMPS ATP-PPase spans 210 to 402; that stretch reads WTSANIIEDA…LGLPYNMLYR (193 aa). 237–243 is an ATP binding site; that stretch reads SGGVDSS.

As to quaternary structure, homodimer.

The catalysed reaction is XMP + L-glutamine + ATP + H2O = GMP + L-glutamate + AMP + diphosphate + 2 H(+). It functions in the pathway purine metabolism; GMP biosynthesis; GMP from XMP (L-Gln route): step 1/1. Functionally, catalyzes the synthesis of GMP from XMP. This chain is GMP synthase [glutamine-hydrolyzing], found in Photobacterium profundum (strain SS9).